The chain runs to 336 residues: tRNA N6-adenosine threonylcarbamoyltransferase (336 aa).

Fe cation is bound by residues His-111 and His-115. Residues 134–138 (VVSGG), Asp-167, Gly-180, Asp-184, and Asn-272 each bind substrate. Asp-300 is a Fe cation binding site.

Belongs to the KAE1 / TsaD family. The cofactor is Fe(2+).

It is found in the cytoplasm. It carries out the reaction L-threonylcarbamoyladenylate + adenosine(37) in tRNA = N(6)-L-threonylcarbamoyladenosine(37) in tRNA + AMP + H(+). In terms of biological role, required for the formation of a threonylcarbamoyl group on adenosine at position 37 (t(6)A37) in tRNAs that read codons beginning with adenine. Is involved in the transfer of the threonylcarbamoyl moiety of threonylcarbamoyl-AMP (TC-AMP) to the N6 group of A37, together with TsaE and TsaB. TsaD likely plays a direct catalytic role in this reaction. This Caldicellulosiruptor saccharolyticus (strain ATCC 43494 / DSM 8903 / Tp8T 6331) protein is tRNA N6-adenosine threonylcarbamoyltransferase.